A 574-amino-acid polypeptide reads, in one-letter code: Interactor of HORMAD1 protein 1 (574 aa).

Positions 113-133 are disordered; that stretch reads GLSKQFEEKKRRATDQSDSET. Basic and acidic residues predominate over residues 117 to 127; it reads QFEEKKRRATD. Residues 217-240 are a coiled coil; sequence MEMKSTLKNLEVLVVEQTKNLQQF. 3 disordered regions span residues 267 to 324, 372 to 393, and 426 to 457; these read GHLK…GVWD, FSNL…GASQ, and TEQK…DRKQ. The segment covering 272–284 has biased composition (low complexity); sequence STSQTSPSLTQSL. Residues 372 to 381 show a composition bias toward polar residues; that stretch reads FSNLPSQRAG. Positions 431 to 449 are enriched in basic residues; that stretch reads RPCRKRRRGKKQQPQRSKR. A phosphoserine mark is found at Ser476, Ser569, and Ser570.

Part of the MCD recombinosome complex, at least composed of IHO1, REC114 and MEI4. Interacts with REC114. Interacts with MEI4. Interacts with HORMAD1. Interacts with ANKRD31. As to expression, detected in spermatocytes and testis (at protein level).

The protein resides in the chromosome. Required for DNA double-strand breaks (DSBs) formation in unsynapsed regions during meiotic recombination. Probably acts by forming a complex with MEI4 and REC114, which activates DSBs formation in unsynapsed regions, an essential step to ensure completion of synapsis. Not required for HORMAD1 functions in pairing-independent synaptonemal complex formation, ATR recruitment to unsynapsed axes, meiotic silencing of unsynapsed chromatin (MSUC) or meiotic surveillance. In Mus musculus (Mouse), this protein is Interactor of HORMAD1 protein 1.